We begin with the raw amino-acid sequence, 305 residues long: Protoheme IX farnesyltransferase (305 aa).

The next 9 membrane-spanning stretches (helical) occupy residues V31 to H51, P52 to I72, A102 to L119, L123 to K145, N151 to S171, I179 to F199, I218 to M238, F240 to F260, and F281 to I301.

Belongs to the UbiA prenyltransferase family. Protoheme IX farnesyltransferase subfamily.

The protein localises to the cell inner membrane. It catalyses the reaction heme b + (2E,6E)-farnesyl diphosphate + H2O = Fe(II)-heme o + diphosphate. The protein operates within porphyrin-containing compound metabolism; heme O biosynthesis; heme O from protoheme: step 1/1. In terms of biological role, converts heme B (protoheme IX) to heme O by substitution of the vinyl group on carbon 2 of heme B porphyrin ring with a hydroxyethyl farnesyl side group. The chain is Protoheme IX farnesyltransferase from Rickettsia akari (strain Hartford).